The following is a 390-amino-acid chain: GTPase Obg (390 aa).

The Obg domain maps to 1-159 (MKFVDEASIL…RELLLELMLL (159 aa)). The tract at residues 127 to 147 (NTRFKSSVNRTPRQKTNGTPG) is disordered. A compositionally biased stretch (polar residues) spans 129 to 145 (RFKSSVNRTPRQKTNGT). The OBG-type G domain maps to 160–333 (ADVGMLGMPN…LCWDVMTFII (174 aa)). GTP is bound by residues 166–173 (GMPNAGKS), 191–195 (FTTLV), 213–216 (DIPG), 283–286 (NKID), and 314–316 (SAA). Mg(2+) is bound by residues Ser173 and Thr193.

Belongs to the TRAFAC class OBG-HflX-like GTPase superfamily. OBG GTPase family. Monomer. Mg(2+) serves as cofactor.

It localises to the cytoplasm. An essential GTPase which binds GTP, GDP and possibly (p)ppGpp with moderate affinity, with high nucleotide exchange rates and a fairly low GTP hydrolysis rate. Plays a role in control of the cell cycle, stress response, ribosome biogenesis and in those bacteria that undergo differentiation, in morphogenesis control. The protein is GTPase Obg of Escherichia coli (strain K12 / DH10B).